A 512-amino-acid chain; its full sequence is Retinaldehyde dehydrogenase 3 (512 aa).

Residues 1–22 (MATANGAVENGQPDRKPPALPR) form a disordered region. Ala-2 carries the N-acetylalanine modification. NAD(+)-binding positions include Lys-204, Glu-207, and 257 to 262 (GSTEVG). The Proton acceptor role is filled by Glu-280. The Nucleophile role is filled by Cys-314. Residues Gln-361 and Glu-411 each contribute to the NAD(+) site.

Belongs to the aldehyde dehydrogenase family. As to quaternary structure, homotetramer. Expressed at low levels in many tissues and at higher levels in salivary gland, stomach, and kidney.

Its subcellular location is the cytoplasm. It catalyses the reaction all-trans-retinal + NAD(+) + H2O = all-trans-retinoate + NADH + 2 H(+). It carries out the reaction retinal + NAD(+) + H2O = retinoate + NADH + 2 H(+). The enzyme catalyses all-trans-13,14-dihydroretinal + NAD(+) + H2O = all-trans-13,14-dihydroretinoate + NADH + 2 H(+). The protein operates within cofactor metabolism; retinol metabolism. Catalyzes the NAD-dependent oxidation of aldehyde substrates, such as all-trans-retinal and all-trans-13,14-dihydroretinal, to their corresponding carboxylic acids, all-trans-retinoate and all-trans-13,14-dihydroretinoate, respectively. High specificity for all-trans-retinal as substrate, can also accept acetaldehyde as substrate in vitro but with lower affinity. Required for the biosynthesis of normal levels of retinoate in the embryonic ocular and nasal regions; a critical lipid in the embryonic development of the eye and the nasal region. The sequence is that of Retinaldehyde dehydrogenase 3 (ALDH1A3) from Homo sapiens (Human).